The primary structure comprises 147 residues: Ribonuclease 4 (147 aa).

Residues Met-1–Gly-28 form the signal peptide. Position 29 is a pyrrolidone carboxylic acid (Gln-29). Arg-35, His-40, Lys-68, Asn-71, and Thr-72 together coordinate dUMP. His-40 acts as the Proton acceptor in catalysis. Intrachain disulfides connect Cys-53-Cys-109, Cys-67-Cys-120, Cys-85-Cys-135, and Cys-92-Cys-99. His-144 (proton donor) is an active-site residue. Phe-145 is a binding site for dUMP.

The protein belongs to the pancreatic ribonuclease family.

It is found in the secreted. Cleaves preferentially after uridine bases. Has antimicrobial activity against uropathogenic E.coli (UPEC). Probably contributes to urinary tract sterility. The polypeptide is Ribonuclease 4 (RNASE4) (Pongo abelii (Sumatran orangutan)).